Reading from the N-terminus, the 92-residue chain is Small ribosomal subunit protein uS19 (92 aa).

It belongs to the universal ribosomal protein uS19 family.

Functionally, protein S19 forms a complex with S13 that binds strongly to the 16S ribosomal RNA. This chain is Small ribosomal subunit protein uS19, found in Vibrio atlanticus (strain LGP32) (Vibrio splendidus (strain Mel32)).